Here is a 510-residue protein sequence, read N- to C-terminus: 2,3-bisphosphoglycerate-independent phosphoglycerate mutase (510 aa).

Mn(2+) contacts are provided by Asp-12 and Ser-62. Catalysis depends on Ser-62, which acts as the Phosphoserine intermediate. Residues His-123, 153-154 (RD), Arg-185, Arg-191, 260-263 (RPDR), and Lys-335 each bind substrate. The Mn(2+) site is built by Asp-402, His-406, Asp-443, His-444, and His-461.

It belongs to the BPG-independent phosphoglycerate mutase family. As to quaternary structure, monomer. Mn(2+) serves as cofactor.

It catalyses the reaction (2R)-2-phosphoglycerate = (2R)-3-phosphoglycerate. It functions in the pathway carbohydrate degradation; glycolysis; pyruvate from D-glyceraldehyde 3-phosphate: step 3/5. Its function is as follows. Catalyzes the interconversion of 2-phosphoglycerate and 3-phosphoglycerate. This Listeria monocytogenes serovar 1/2a (strain ATCC BAA-679 / EGD-e) protein is 2,3-bisphosphoglycerate-independent phosphoglycerate mutase.